Consider the following 137-residue polypeptide: Small ribosomal subunit protein bS6 (137 aa).

The segment at 96–137 is disordered; the sequence is ITEASPMAKAKDERDTRRSSEERAPRAEATEEAEESAENTAE. A compositionally biased stretch (basic and acidic residues) spans 104–124; that stretch reads KAKDERDTRRSSEERAPRAEA. The span at 125–137 shows a compositional bias: acidic residues; that stretch reads TEEAEESAENTAE.

Belongs to the bacterial ribosomal protein bS6 family.

Functionally, binds together with bS18 to 16S ribosomal RNA. The sequence is that of Small ribosomal subunit protein bS6 from Shewanella pealeana (strain ATCC 700345 / ANG-SQ1).